The primary structure comprises 140 residues: Large ribosomal subunit protein uL13 (140 aa).

The protein belongs to the universal ribosomal protein uL13 family. As to quaternary structure, part of the 50S ribosomal subunit.

Its function is as follows. This protein is one of the early assembly proteins of the 50S ribosomal subunit, although it is not seen to bind rRNA by itself. It is important during the early stages of 50S assembly. The protein is Large ribosomal subunit protein uL13 of Methanosarcina barkeri (strain Fusaro / DSM 804).